Consider the following 146-residue polypeptide: Mitochondrial pyruvate carrier 3 (146 aa).

The transit peptide at 1 to 20 (MSASAFNFAFRRFWNSETGP) directs the protein to the mitochondrion. A run of 3 helical transmembrane segments spans residues 23–39 (VHFW…FAGL), 55–71 (LSLL…SFVI), and 78–94 (LASV…YHLT).

Belongs to the mitochondrial pyruvate carrier (MPC) (TC 2.A.105) family. In terms of assembly, the functional 150 kDa pyruvate import complex is a heteromer of MPC1 and either MPC2 or MPC3.

It is found in the mitochondrion. The protein resides in the mitochondrion inner membrane. Functionally, mediates the uptake of pyruvate into mitochondria. The polypeptide is Mitochondrial pyruvate carrier 3 (Saccharomyces cerevisiae (strain ATCC 204508 / S288c) (Baker's yeast)).